Here is a 245-residue protein sequence, read N- to C-terminus: Phycocyanobilin:ferredoxin oxidoreductase (245 aa).

It belongs to the HY2 family.

The catalysed reaction is (2R,3Z)-phycocyanobilin + 4 oxidized [2Fe-2S]-[ferredoxin] = biliverdin IXalpha + 4 reduced [2Fe-2S]-[ferredoxin] + 4 H(+). Functionally, catalyzes the four-electron reduction of biliverdin IX-alpha (2-electron reduction at both the A and D rings); the reaction proceeds via an isolatable 2-electron intermediate, 181,182-dihydrobiliverdin. This Gloeothece citriformis (strain PCC 7424) (Cyanothece sp. (strain PCC 7424)) protein is Phycocyanobilin:ferredoxin oxidoreductase.